Reading from the N-terminus, the 99-residue chain is Small ribosomal subunit protein bS20 (99 aa).

It belongs to the bacterial ribosomal protein bS20 family.

Functionally, binds directly to 16S ribosomal RNA. The protein is Small ribosomal subunit protein bS20 of Thermomicrobium roseum (strain ATCC 27502 / DSM 5159 / P-2).